The chain runs to 572 residues: Potassium-transporting ATPase potassium-binding subunit (572 aa).

Helical transmembrane passes span 6-26 (ILFVVFIFTLVIITKPLGTYI), 66-86 (FFSLLSFSIMAFIFVFVVLLL), 135-155 (ALAVQNFVSAAVGLCVAIVLI), 177-197 (IFWILLPISIIIAIVYIFQGV), 251-271 (TIITNYIQMVSIFAIAAALTY), 283-303 (GWMIFAVMLVLFVISLMVMTI), 382-402 (IFGGIGAGFYGFFMFLMLAVF), 428-448 (MFALLISPCCVLVFTGLAAVI), 493-513 (ITIALSMLIGRFGVIFAVMML), and 537-557 (FIFSVLVFFTIVLIGGLTIFP).

Belongs to the KdpA family. The system is composed of three essential subunits: KdpA, KdpB and KdpC.

The protein resides in the cell inner membrane. Part of the high-affinity ATP-driven potassium transport (or Kdp) system, which catalyzes the hydrolysis of ATP coupled with the electrogenic transport of potassium into the cytoplasm. This subunit binds the periplasmic potassium ions and delivers the ions to the membrane domain of KdpB through an intramembrane tunnel. The chain is Potassium-transporting ATPase potassium-binding subunit from Francisella philomiragia subsp. philomiragia (strain ATCC 25017 / CCUG 19701 / FSC 153 / O#319-036).